The following is a 387-amino-acid chain: 2-deoxystreptamine glucosyltransferase (387 aa).

This sequence belongs to the glycosyltransferase group 1 family.

The catalysed reaction is 2-deoxystreptamine + UDP-N-acetyl-alpha-D-glucosamine = 2'-N-acetylparomamine + UDP + H(+). It catalyses the reaction 2-deoxystreptamine + UDP-alpha-D-glucose = 2'-deamino-2'-hydroxyparomamine + UDP + H(+). It participates in antibiotic biosynthesis; kanamycin biosynthesis. Its function is as follows. Glycosyltransferase involved in the biosynthesis of kanamycin by mediating conversion of 2-deoxystreptamine (2-DOS) to 2'-N-acetylparomamine using UDP-alpha-D-glucose as sugar donor. Can also accept UDP-alpha-D-glucosamine, but with a much lower activity compared to UDP-alpha-D-glucose. This Streptomyces kanamyceticus protein is 2-deoxystreptamine glucosyltransferase (kanF).